A 78-amino-acid chain; its full sequence is Beta-defensin 105A (78 aa).

The N-terminal stretch at 1-27 (MALIRKTFYFLFAVFFVLVQLPSECQA) is a signal peptide. 3 disulfides stabilise this stretch: cysteine 43/cysteine 74, cysteine 53/cysteine 67, and cysteine 57/cysteine 73.

This sequence belongs to the beta-defensin family.

The protein resides in the secreted. Has antimicrobial activity. The protein is Beta-defensin 105A (DEFB105A) of Pongo pygmaeus (Bornean orangutan).